We begin with the raw amino-acid sequence, 469 residues long: Glutamate--tRNA ligase (469 aa).

The 'HIGH' region signature appears at 11–21; that stretch reads PSPTGFIHLGN. A compositionally biased stretch (basic and acidic residues) spans 114–131; it reads QREAGEKPRYDGTWRPEP. The tract at residues 114 to 139 is disordered; that stretch reads QREAGEKPRYDGTWRPEPGKVLPEPP. The 'KMSKS' region signature appears at 243 to 247; it reads KMSKR. Residue Lys246 coordinates ATP.

Belongs to the class-I aminoacyl-tRNA synthetase family. Glutamate--tRNA ligase type 1 subfamily. As to quaternary structure, monomer.

The protein localises to the cytoplasm. It catalyses the reaction tRNA(Glu) + L-glutamate + ATP = L-glutamyl-tRNA(Glu) + AMP + diphosphate. In terms of biological role, catalyzes the attachment of glutamate to tRNA(Glu) in a two-step reaction: glutamate is first activated by ATP to form Glu-AMP and then transferred to the acceptor end of tRNA(Glu). The chain is Glutamate--tRNA ligase from Paraburkholderia phytofirmans (strain DSM 17436 / LMG 22146 / PsJN) (Burkholderia phytofirmans).